The following is a 512-amino-acid chain: Chitin synthase regulatory factor 2 (512 aa).

Sel1-like repeat units lie at residues 224–260 (SEALYLLAVCYGTGALRTEINEKEAYRLYKMAADLNH), 261–296 (VQAAYRVAICLQMGFGVTQNTEEAIHYFFRAASGQH), 297–333 (VGAMHRMALIYFRGLMSVKRDPVKAMYYLNLGALEAD), 337–377 (PQAL…KYGL), 378–414 (KDAQLRVARCFELGQLECDINLVRSFVWYRRLARKRN), and 415–452 (PEAMWKLSQFYLNGVDDVIYPNPELANEWAKAAAYKNH). At Cys509 the chain carries Cysteine methyl ester. A lipid anchor (S-farnesyl cysteine) is attached at Cys509. A propeptide spans 510 to 512 (IIS) (removed in mature form).

It localises to the membrane. Involved in chitin biosynthesis. The polypeptide is Chitin synthase regulatory factor 2 (chr2) (Schizosaccharomyces pombe (strain 972 / ATCC 24843) (Fission yeast)).